The sequence spans 311 residues: p-hydroxybenzoic acid efflux pump subunit AaeA (311 aa).

Residues 11–31 (VGITVLVVVLAVIAIFNVWAF) traverse the membrane as a helical segment.

It belongs to the membrane fusion protein (MFP) (TC 8.A.1) family.

The protein localises to the cell inner membrane. Its function is as follows. Forms an efflux pump with AaeB. In Yersinia pseudotuberculosis serotype O:3 (strain YPIII), this protein is p-hydroxybenzoic acid efflux pump subunit AaeA.